The primary structure comprises 347 residues: L-Ala-D/L-amino acid epimerase (347 aa).

156 to 158 (KLK) contributes to the substrate binding site. The Mg(2+) site is built by Asp-183, Glu-211, and Asp-237. Substrate-binding positions include Lys-259 and 309-311 (DID).

Belongs to the mandelate racemase/muconate lactonizing enzyme family. Requires Mg(2+) as cofactor.

Functionally, dipeptide epimerase with a broad substrate specificity. Catalyzes the epimerization of L-Ala-L-Ala, L-Ala-L-Ser, L-Ala-L-Thr, L-Ala-L-Met, L-Ala-L-Phe, L-Ala-L-Tyr, L-Gly-L-Asp, L-Val-L-Asp, L-Val-L-Glu and L-Val-L-Phe (in vitro). Can also catalyze the epimerization of L-Ala-L-Glu, but with lower efficiency. This chain is L-Ala-D/L-amino acid epimerase, found in Pedosphaera parvula (strain Ellin514).